A 160-amino-acid polypeptide reads, in one-letter code: Triabin (160 aa).

Positions 1–18 are cleaved as a signal peptide; that stretch reads MKTIIAVTIFGILTCAYA. 3 cysteine pairs are disulfide-bonded: Cys24/Cys128, Cys57/Cys160, and Cys87/Cys102.

The protein belongs to the calycin superfamily. Triabin family. As to expression, expressed in salivary glands.

It localises to the secreted. Thrombin inhibitor. Forms a non-covalent complex with thrombin at a molar ratio of 1:1. Inhibits thrombin-induced platelet aggregation. Prolongs thrombin clotting time and activated partial thromboplastin time. It only minimally suppresses the amidolytic activity of thrombin. Inhibits thrombin-mediated fibrin formation in the host. Inhibits thrombin-induced endothelium-dependent relaxant and contractile responses in host blood vessels. Inhibits thrombin-induced mitogenesis in host vascular smooth muscle cells. The protein is Triabin of Meccus pallidipennis (Triatomine bug).